The sequence spans 116 residues: MNAAVETPEILVFTDNAANKVRELIDEEGNPALKLRVFVTGGGCSGFQYGFTFDEEVNEDDTAFEKNGVTLLIDPMSYQYLVGAEIDYTEGLEGSQFVIRNPNATSTCGCGSSFSA.

Positions 44, 108, and 110 each coordinate iron-sulfur cluster.

This sequence belongs to the HesB/IscA family. As to quaternary structure, homodimer. It depends on iron-sulfur cluster as a cofactor.

Its function is as follows. Required for insertion of 4Fe-4S clusters. This is Putative iron-sulfur cluster insertion protein ErpA from Azoarcus sp. (strain BH72).